The following is a 212-amino-acid chain: MTTQKIVPTKSTDGSKLFRHQAKFVAGAMNINQIPNFSLPEIAFVGKSNVGKSSLINTICNNKNLAKVSNTAGRTRQINFFNLADKLIIVDLPGYGFANVPISVKEQWGVLISYYLRNSYNLRLVNLLIDSRRGIKENDKKVADLLLANKREFQIIFTKSDKVTDHKNLHDEAQNFLATLNYSCNVMYVSNRSKEGARELKASLAKCIKFQK.

One can recognise an EngB-type G domain in the interval 38–210 (SLPEIAFVGK…KASLAKCIKF (173 aa)). GTP-binding positions include 46–53 (GKSNVGKS), 73–77 (GRTRQ), 91–94 (DLPG), 158–161 (TKSD), and 189–191 (VSN). Mg(2+)-binding residues include Ser53 and Thr75.

It belongs to the TRAFAC class TrmE-Era-EngA-EngB-Septin-like GTPase superfamily. EngB GTPase family. Requires Mg(2+) as cofactor.

Its function is as follows. Necessary for normal cell division and for the maintenance of normal septation. The polypeptide is Probable GTP-binding protein EngB (Rickettsia rickettsii (strain Sheila Smith)).